We begin with the raw amino-acid sequence, 271 residues long: Phosphatidylinositol transfer protein beta isoform (271 aa).

The residue at position 215 (K215) is an N6-acetyllysine. Phosphoserine; by PKC is present on S262.

It belongs to the PtdIns transfer protein family. PI transfer class I subfamily. In terms of processing, constitutive phosphorylation of Ser-262 has no effect on phospholipid transfer activity but is required for Golgi targeting.

The protein localises to the golgi apparatus. It localises to the golgi apparatus membrane. Its subcellular location is the endoplasmic reticulum membrane. It catalyses the reaction a 1,2-diacyl-sn-glycero-3-phosphocholine(in) = a 1,2-diacyl-sn-glycero-3-phosphocholine(out). It carries out the reaction a 1,2-diacyl-sn-glycero-3-phospho-(1D-myo-inositol)(in) = a 1,2-diacyl-sn-glycero-3-phospho-(1D-myo-inositol)(out). The catalysed reaction is an N-(acyl)-sphingosylphosphocholine(in) = an N-(acyl)-sphingosylphosphocholine(out). Its function is as follows. Catalyzes the transfer of phosphatidylinositol, phosphatidylcholine and sphingomyelin between membranes. Required for COPI-mediated retrograde transport from the Golgi to the endoplasmic reticulum; phosphatidylinositol and phosphatidylcholine transfer activity is essential for this function. This chain is Phosphatidylinositol transfer protein beta isoform (Pitpnb), found in Mus musculus (Mouse).